The sequence spans 305 residues: Coenzyme PQQ synthesis protein B (305 aa).

This sequence belongs to the PqqB family.

The protein operates within cofactor biosynthesis; pyrroloquinoline quinone biosynthesis. Its function is as follows. May be involved in the transport of PQQ or its precursor to the periplasm. This is Coenzyme PQQ synthesis protein B from Cupriavidus necator (strain ATCC 17699 / DSM 428 / KCTC 22496 / NCIMB 10442 / H16 / Stanier 337) (Ralstonia eutropha).